A 303-amino-acid chain; its full sequence is Growth/differentiation factor 15 (303 aa).

Residues 1 to 30 (MAPPALQAQPPGGSQLRFLLFLLLLLLLLS) form the signal peptide. Residues 31 to 188 (WPSQGDALAM…LRVAAGRGRR (158 aa)) constitute a propeptide that is removed on maturation. Asn71 is a glycosylation site (N-linked (GlcNAc...) asparagine). Disulfide bonds link Cys198/Cys205, Cys206/Cys269, Cys235/Cys300, and Cys239/Cys302.

This sequence belongs to the TGF-beta family. As to quaternary structure, homodimer; disulfide-linked. Interacts with GFRAL and RET; ligand of GFRAL, which mediates GDF15 internalization and cellular signaling through interaction with RET via the formation of a 2:2:2 ternary complex composed of GDF15, GFRAL and RET. As to expression, detected in plasma (at protein level). Highly expressed in liver. Expressed in the distal small intestine, colon and kidney. Expressed in skeletal muscle in response to mitochondrial stress. Expressed by cardiomyocytes, expression is highly increased in heart diseases. Also detected in subcutaneous fat.

It localises to the secreted. Its function is as follows. Hormone produced in response to various stresses to confer information about those stresses to the brain, and trigger an aversive response, characterized by nausea and/or loss of appetite. The aversive response is both required to reduce continuing exposure to those stresses at the time of exposure and to promote avoidance behavior in the future. Acts by binding to its receptor, GFRAL, activating GFRAL-expressing neurons localized in the area postrema and nucleus tractus solitarius of the brainstem. It then triggers the activation of neurons localized within the parabrachial nucleus and central amygdala, which constitutes part of the 'emergency circuit' that shapes responses to stressful conditions. The GDF15-GFRAL signal induces expression of genes involved in metabolism, such as lipid metabolism in adipose tissues. Required for avoidance behavior in response to food allergens: induced downstream of mast cell activation to promote aversion and minimize harmful effects of exposure to noxious substances. In addition to suppress appetite, also promotes weight loss by enhancing energy expenditure in muscle: acts by increasing calcium futile cycling in muscle. Contributes to the effect of metformin, an anti-diabetic drug, on appetite reduction and weight loss: produced in the kidney in response to metformin treatment, thereby activating the GDF15-GFRAL response, leading to reduced appetite and weight. Produced in response to anticancer drugs, such as camptothecin or cisplatin, promoting nausea and contributing to malnutrition. Overproduced in many cancers, promoting anorexia in cancer (cachexia). Responsible for the risk of nausea during pregnancy: high levels of GDF15 during pregnancy, mostly originating from embryos, are associated with increased nausea. Maternal sensitivity to nausea is probably determined by pre-pregnancy exposure to GDF15, females with naturally high level of GDF15 being less susceptible to nausea than female mice with low levels of GDF15 before pregnancy. Promotes metabolic adaptation in response to systemic inflammation caused by bacterial and viral infections in order to promote tissue tolerance and prevent tissue damage. Required for tissue tolerance in response to myocardial infarction by acting as an inhibitor of leukocyte integring activation, thereby protecting against cardiac rupture. Inhibits growth hormone signaling on hepatocytes. The polypeptide is Growth/differentiation factor 15 (Mus musculus (Mouse)).